The sequence spans 605 residues: UvrABC system protein C (605 aa).

The GIY-YIG domain maps to 15–92; that stretch reads GLPGCYLMKN…IQKHQPYFNI (78 aa). In terms of domain architecture, UVR spans 197 to 232; sequence GHAKKDLTQRMEKAAADMAYERAGDLRDQIRYIEAT.

The protein belongs to the UvrC family. In terms of assembly, interacts with UvrB in an incision complex.

It is found in the cytoplasm. Its function is as follows. The UvrABC repair system catalyzes the recognition and processing of DNA lesions. UvrC both incises the 5' and 3' sides of the lesion. The N-terminal half is responsible for the 3' incision and the C-terminal half is responsible for the 5' incision. The sequence is that of UvrABC system protein C from Levilactobacillus brevis (strain ATCC 367 / BCRC 12310 / CIP 105137 / JCM 1170 / LMG 11437 / NCIMB 947 / NCTC 947) (Lactobacillus brevis).